Here is a 463-residue protein sequence, read N- to C-terminus: tRNA-2-methylthio-N(6)-dimethylallyladenosine synthase (463 aa).

In terms of domain architecture, MTTase N-terminal spans 19 to 135 (GSYWITTFGC…LESLLNQVDS (117 aa)). Residues Cys28, Cys64, Cys98, Cys170, Cys174, and Cys177 each coordinate [4Fe-4S] cluster. The Radical SAM core domain maps to 156 to 393 (RDSSICGWVN…NSLVENIAKE (238 aa)). Residues 396–463 (QRYKNTSQEI…RPFSLTAKLL (68 aa)) enclose the TRAM domain.

Belongs to the methylthiotransferase family. MiaB subfamily. Monomer. [4Fe-4S] cluster serves as cofactor.

The protein localises to the cytoplasm. It carries out the reaction N(6)-dimethylallyladenosine(37) in tRNA + (sulfur carrier)-SH + AH2 + 2 S-adenosyl-L-methionine = 2-methylsulfanyl-N(6)-dimethylallyladenosine(37) in tRNA + (sulfur carrier)-H + 5'-deoxyadenosine + L-methionine + A + S-adenosyl-L-homocysteine + 2 H(+). Its function is as follows. Catalyzes the methylthiolation of N6-(dimethylallyl)adenosine (i(6)A), leading to the formation of 2-methylthio-N6-(dimethylallyl)adenosine (ms(2)i(6)A) at position 37 in tRNAs that read codons beginning with uridine. The protein is tRNA-2-methylthio-N(6)-dimethylallyladenosine synthase of Prochlorococcus marinus (strain NATL2A).